The following is a 116-amino-acid chain: T cell receptor alpha variable 14/delta variable 4 (116 aa).

A signal peptide spans 1-21 (MSLSSLLKVVTASLWLGPGIA). An Ig-like domain is found at 22–116 (QKITQTQPGM…SAMYFCAMRE (95 aa)). The cysteines at positions 43 and 112 are disulfide-linked. Asn-78 carries N-linked (GlcNAc...) asparagine glycosylation.

In terms of assembly, alpha-beta TR is a heterodimer composed of an alpha and beta chain; disulfide-linked. The alpha-beta TR is associated with the transmembrane signaling CD3 coreceptor proteins to form the TR-CD3 (TcR or TCR). The assembly of alpha-beta TR heterodimers with CD3 occurs in the endoplasmic reticulum where a single alpha-beta TR heterodimer associates with one CD3D-CD3E heterodimer, one CD3G-CD3E heterodimer and one CD247 homodimer forming a stable octameric structure. CD3D-CD3E and CD3G-CD3E heterodimers preferentially associate with TR alpha and TR beta chains, respectively. The association of the CD247 homodimer is the last step of TcR assembly in the endoplasmic reticulum and is required for transport to the cell surface.

The protein localises to the cell membrane. Its function is as follows. V region of the variable domain of T cell receptor (TR) alpha chain that participates in the antigen recognition. Alpha-beta T cell receptors are antigen specific receptors which are essential to the immune response and are present on the cell surface of T lymphocytes. Recognize peptide-major histocompatibility (MH) (pMH) complexes that are displayed by antigen presenting cells (APC), a prerequisite for efficient T cell adaptive immunity against pathogens. Binding of alpha-beta TR to pMH complex initiates TR-CD3 clustering on the cell surface and intracellular activation of LCK that phosphorylates the ITAM motifs of CD3G, CD3D, CD3E and CD247 enabling the recruitment of ZAP70. In turn ZAP70 phosphorylates LAT, which recruits numerous signaling molecules to form the LAT signalosome. The LAT signalosome propagates signal branching to three major signaling pathways, the calcium, the mitogen-activated protein kinase (MAPK) kinase and the nuclear factor NF-kappa-B (NF-kB) pathways, leading to the mobilization of transcription factors that are critical for gene expression and essential for T cell growth and differentiation. The T cell repertoire is generated in the thymus, by V-(D)-J rearrangement. This repertoire is then shaped by intrathymic selection events to generate a peripheral T cell pool of self-MH restricted, non-autoaggressive T cells. Post-thymic interaction of alpha-beta TR with the pMH complexes shapes TR structural and functional avidity. This chain is T cell receptor alpha variable 14/delta variable 4, found in Homo sapiens (Human).